We begin with the raw amino-acid sequence, 2184 residues long: MGAQVSTQKTGAHETSLSATGNSIIHYTNINYYKDAASNSANRQDFTQDPGKFTEPMKDVMIKTLPALNSPTVEECGYSDRVRSITLGNSTITTQECANVVVGYGEWPEYLSDNEATAEDQPTQPDVATCRFYTLDSVQWENGSPGWWWKFPDALRDMGLFGQNMYYHYLGRAGYTIHVQCNASKFHQGCILVVCVPEAEMGSAQTSGVVNYEHISKGEIASRFTTTTTAEDHGVQAAVWNAGMGVGVGNLTIFPHQWINLRTNNSATIVMPYVNSVPMDNMYRHHNFTLMIIPFVPLDFSAGASTYVPITVTVAPMCAEYNGLRLAGHQGLPTMNTPGSNQFLTSDDFQSPSAMPQFDVTPEMHIPGEVRNLMEIAEVDSVMPINNDSAAKVSSMEAYRVELSTNTNAGTQVFGFQLNPGAESVMNRTLMGEILNYYAHWSGSIKITFVFCGSAMTTGKFLLSYAPPGAGAPKTRKDAMLGTHVVWDVGLQSSCVLCIPWISQTHYRFVEKDPYTNAGFVTCWYQTSVVSPASNQPKCYMMCMVSACNDFSVRMLRDTKFIEQTSFYQGDVQNAVEGAMVRVADTVQTSATNSERVPNLTAVETGHTSQAVPGDTMQTRHVINNHVRSESTIENFLARSACVFYLEYKTGTKEDSNSFNNWVITTRRVAQLRRKLEMFTYLRFDMEITVVITSSQDQSTSQNQNAPVLTHQIMYVPPGGPIPVSVDDYSWQTSTNPSIFWTEGNAPARMSIPFISIGNAYSNFYDGWSHFSQAGVYGFTTLNNMGQLFFRHVNKPNPAAITSVARIYFKPKHVRAWVPRPPRLCPYINSTNVNFEPKPVTEVRTNIITTGAFGQQSGAVYVGNYRVVNRHLATHIDWQNCVWEDYNRDLLVSTTTAHGCDTIARCQCTTGVYFCLSRNKHYPVSFEGPGLVEVQESEYYPKRYQSHVLLAAGFSEPGDCGGILRCEHGVIGIVTMGGEGVVGFADVRDLLWLEDDAMEQGVKDYVEQLGNAFGSGFTNQICEQVNLLKESLVGQDSILEKSLKALVKIISALVIVVRNHDDLITVTATLALIGCTSSPWRWLKQKVSQYYGIPMAERQNNGWLKKFTEMTNACKGMEWIAIKIQKFIEWLKVKILPEVKEKHEFLNRLKQLPLLESQIATIEQSAPSQGDQEQLFSNVQYFAHYCRKYAPLYAAEAKRVFSLEKKMSNYIQFKSKCRIEPVCLLLHGSPGAGKSVATNLIGRSLAEKLNSSVYSLPPDPDHFDGYKQQAVVIMDDLCQNPDGKDVSLFCQMVSSVDFVPPMAALEEKGILFTSPFVLASTNAGSINAPTVSDSRALARRFHFDMNIEVISMYSQNGKINMPMSVKTCDEDCCPVNFKKCCPLVCGKAIQFIDRKTQVRYSLDMLVTEMFREYNHRHSVGATLEALFQGPPVYREIKISVAPETPPPPAIADLLKSVDSEAVREYCKEKGWLVPEISSTLQIEKHVSRAFICLQALTTFVSVAGIIYIIYKLFAGFQGAYTGMPNQKPKVPTLRQAKVQGPAFEFAVAMMKRNASTVKTEYGEFTMLGIYDRWAVLPRHAKPGPTILMNDQEVGVLDAKELVDKDGTNLELTLLKLNRNEKFRDIRGFLAREEAEVNEAVLAINTSKFPNMYIPVGQVTDYGFLNLGGTPTKRMLMYNFPTRAGQCGGVLMSTGKVLGIHVGGNGHQGFSAALLRHYFNEEQGEIEFIESSKDAGFPVINTPSKTKLEPSVFHQVFEGNKEPAVLRNGDPRLKVNFEEAIFSKYIGNVNTHVDEYMQEAVDHYAGQLATLDISTEPMKLEDAVYGTEGLEALDLTTSAGYPYVALGIKKRDILSKKTKDLTKLKECMDKYGLNLPMVTYVKDELRSAEKVAKGKSRLIEASSLNDSVAMRQTFGNLYKTFHLNPGIVTGSAVGCDPDVFWSKIPVMLDGHLIAFDYSGYDASLSPVWFACLKLLLEKLGYTNKETNYIDYLCNSHHLYRDKHYFVRGGMPSGCSGTSIFNSMINNIIIRTLMLKVYKGIDLDQFRMIAYGDDVIASYPWPIDASLLAEAGKDYGLIMTPADKGECFNEVTWTNVTFLKRYFRADEQYPFLVHPVMPMKDIHESIRWTKDPKNTQDHVRSLCLLAWHNGEHEYEEFIRKIRSVPVGRCLTLPAFSTLRRKWLDSF.

Gly-2 carries N-myristoyl glycine; by host lipidation. The Cytoplasmic portion of the chain corresponds to 2–1494 (GAQVSTQKTG…HVSRAFICLQ (1493 aa)). Positions 567–583 (FYQGDVQNAVEGAMVRV) are amphipathic alpha-helix. Residues His-871 and Asp-889 each act as for protease 2A activity in the active site. Zn(2+) is bound by residues Cys-906 and Cys-908. Residue Cys-960 is the For protease 2A activity of the active site. Cys-966 and His-968 together coordinate Zn(2+). The tract at residues 1100–1172 (NNGWLKKFTE…EQSAPSQGDQ (73 aa)) is membrane-binding. Positions 1100 to 1238 (NNGWLKKFTE…SPGAGKSVAT (139 aa)) are oligomerization. Residues 1121–1125 (AIKIQ) form an RNA-binding region. The region spanning 1204–1360 (EKKMSNYIQF…SMYSQNGKIN (157 aa)) is the SF3 helicase domain. The Zn(2+) site is built by Cys-1368, Cys-1380, and Cys-1385. The C4-type; degenerate zinc finger occupies 1368–1385 (CDEDCCPVNFKKCCPLVC). Positions 1412-1419 (EYNHRHSV) are RNA-binding. An oligomerization region spans residues 1423–1428 (LEALFQ). The stretch at 1495–1510 (ALTTFVSVAGIIYIIY) is an intramembrane region. At 1511-2184 (KLFAGFQGAY…TLRRKWLDSF (674 aa)) the chain is on the cytoplasmic side. Residue Tyr-1520 is modified to O-(5'-phospho-RNA)-tyrosine. Residues 1540–1718 (GPAFEFAVAM…FSAALLRHYF (179 aa)) enclose the Peptidase C3 domain. Catalysis depends on for protease 3C activity residues His-1579, Glu-1610, and Cys-1686. Positions 1949–2065 (GHLIAFDYSG…SYPWPIDASL (117 aa)) constitute a RdRp catalytic domain. Mg(2+) is bound by residues Asp-1955 and Asp-2051.

It belongs to the picornaviruses polyprotein family. In terms of assembly, interacts with capsid protein VP1 and capsid protein VP3 to form heterotrimeric protomers. As to quaternary structure, interacts with capsid protein VP0, and capsid protein VP3 to form heterotrimeric protomers. Five protomers subsequently associate to form pentamers which serve as building blocks for the capsid. Interacts with capsid protein VP2, capsid protein VP3 and capsid protein VP4 following cleavage of capsid protein VP0. Interacts with capsid protein VP1 and capsid protein VP3 in the mature capsid. In terms of assembly, interacts with capsid protein VP0 and capsid protein VP1 to form heterotrimeric protomers. Five protomers subsequently associate to form pentamers which serve as building blocks for the capsid. Interacts with capsid protein VP4 in the mature capsid. Interacts with protein 2C; this interaction may be important for virion morphogenesis. As to quaternary structure, interacts with capsid protein VP1 and capsid protein VP3. Homodimer. In terms of assembly, homohexamer; forms a hexameric ring structure with 6-fold symmetry characteristic of AAA+ ATPases. Interacts (via N-terminus) with host RTN3 (via reticulon domain); this interaction is important for viral replication. Interacts with capsid protein VP3; this interaction may be important for virion morphogenesis. As to quaternary structure, interacts with protein 3CD. Homodimer. Interacts with host GBF1. Interacts (via GOLD domain) with host ACBD3 (via GOLD domain); this interaction allows the formation of a viral protein 3A/ACBD3 heterotetramer with a 2:2 stoichiometry, which will stimulate the recruitment of host PI4KB in order to synthesize PI4P at the viral RNA replication sites. In terms of assembly, interacts with RNA-directed RNA polymerase. As to quaternary structure, interacts with protein 3AB and with RNA-directed RNA polymerase. Interacts with Viral protein genome-linked and with protein 3CD. It depends on Mg(2+) as a cofactor. Specific enzymatic cleavages in vivo by the viral proteases yield processing intermediates and the mature proteins. In terms of processing, myristoylation is required for the formation of pentamers during virus assembly. Further assembly of 12 pentamers and a molecule of genomic RNA generates the provirion. Post-translationally, during virion maturation, immature virions are rendered infectious following cleavage of VP0 into VP4 and VP2. This maturation seems to be an autocatalytic event triggered by the presence of RNA in the capsid and it is followed by a conformational change infectious virion. Myristoylation is required during RNA encapsidation and formation of the mature virus particle. In terms of processing, VPg is uridylylated by the polymerase into VPg-pUpU. This acts as a nucleotide-peptide primer for the genomic RNA replication.

The protein resides in the virion. The protein localises to the host cytoplasm. Its subcellular location is the host cytoplasmic vesicle membrane. It localises to the host nucleus. The enzyme catalyses a ribonucleoside 5'-triphosphate + H2O = a ribonucleoside 5'-diphosphate + phosphate + H(+). It catalyses the reaction Selective cleavage of Tyr-|-Gly bond in the picornavirus polyprotein.. The catalysed reaction is RNA(n) + a ribonucleoside 5'-triphosphate = RNA(n+1) + diphosphate. It carries out the reaction Selective cleavage of Gln-|-Gly bond in the poliovirus polyprotein. In other picornavirus reactions Glu may be substituted for Gln, and Ser or Thr for Gly.. Replication or transcription is subject to high level of random mutations by the nucleotide analog ribavirin. Forms an icosahedral capsid of pseudo T=3 symmetry with capsid proteins VP2 and VP3. The capsid is 300 Angstroms in diameter, composed of 60 copies of each capsid protein and enclosing the viral positive strand RNA genome. Capsid protein VP1 mainly forms the vertices of the capsid. Capsid protein VP1 interacts with host ITGA2/ITGB1 to provide virion attachment to target host cells. This attachment induces virion internalization predominantly through caveolin-mediated endocytosis. Tyrosine kinases are probably involved in the entry process. After binding to its receptor, the capsid undergoes conformational changes. Capsid protein VP1 N-terminus (that contains an amphipathic alpha-helix) and capsid protein VP4 are externalized. Together, they shape a pore in the host membrane through which viral genome is translocated to host cell cytoplasm. Functionally, forms an icosahedral capsid of pseudo T=3 symmetry with capsid proteins VP2 and VP3. The capsid is 300 Angstroms in diameter, composed of 60 copies of each capsid protein and enclosing the viral positive strand RNA genome. In terms of biological role, lies on the inner surface of the capsid shell. After binding to the host receptor, the capsid undergoes conformational changes. Capsid protein VP4 is released, Capsid protein VP1 N-terminus is externalized, and together, they shape a pore in the host membrane through which the viral genome is translocated into the host cell cytoplasm. Its function is as follows. Component of immature procapsids, which is cleaved into capsid proteins VP4 and VP2 after maturation. Allows the capsid to remain inactive before the maturation step. Cysteine protease that cleaves viral polyprotein and specific host proteins. It is responsible for the autocatalytic cleavage between the P1 and P2 regions, which is the first cleavage occurring in the polyprotein. Also cleaves the host translation initiation factor EIF4G1, in order to shut down the capped cellular mRNA translation. Inhibits the host nucleus-cytoplasm protein and RNA trafficking by cleaving host members of the nuclear pores. Counteracts stress granule formation probably by antagonizing its assembly or promoting its dissassembly. Functionally, plays an essential role in the virus replication cycle by acting as a viroporin. Creates a pore in the host endoplasmic reticulum and as a consequence releases Ca2+ in the cytoplasm of infected cell. In turn, high levels of cytoplasmic calcium may trigger membrane trafficking and transport of viral ER-associated proteins to viroplasms, sites of viral genome replication. In terms of biological role, induces and associates with structural rearrangements of intracellular membranes. Displays RNA-binding, nucleotide binding and NTPase activities. May play a role in virion morphogenesis and viral RNA encapsidation by interacting with the capsid protein VP3. Its function is as follows. Localizes the viral replication complex to the surface of membranous vesicles. Together with protein 3CD binds the Cis-Active RNA Element (CRE) which is involved in RNA synthesis initiation. Acts as a cofactor to stimulate the activity of 3D polymerase, maybe through a nucleid acid chaperone activity. Localizes the viral replication complex to the surface of membranous vesicles. It inhibits host cell endoplasmic reticulum-to-Golgi apparatus transport and causes the disassembly of the Golgi complex, possibly through GBF1 interaction. This would result in depletion of MHC, trail receptors and IFN receptors at the host cell surface. Plays an essential role in viral RNA replication by recruiting ACBD3 and PI4KB at the viral replication sites, thereby allowing the formation of the rearranged membranous structures where viral replication takes place. Functionally, acts as a primer for viral RNA replication and remains covalently bound to viral genomic RNA. VPg is uridylylated prior to priming replication into VPg-pUpU. The oriI viral genomic sequence may act as a template for this. The VPg-pUpU is then used as primer on the genomic RNA poly(A) by the RNA-dependent RNA polymerase to replicate the viral genome. During genome replication, the VPg-RNA linkage is removed by the host TDP2, thereby accelerating replication. During the late stage of the replication cycle, host TDP2 is excluded from sites of viral RNA synthesis and encapsidation, allowing for the generation of progeny virions. In terms of biological role, involved in the viral replication complex and viral polypeptide maturation. It exhibits protease activity with a specificity and catalytic efficiency that is different from protease 3C. Protein 3CD lacks polymerase activity. Protein 3CD binds to the 5'UTR of the viral genome. Its function is as follows. Replicates the viral genomic RNA on the surface of intracellular membranes. May form linear arrays of subunits that propagate along a strong head-to-tail interaction called interface-I. Covalently attaches UMP to a tyrosine of VPg, which is used to prime RNA synthesis. The positive stranded RNA genome is first replicated at virus induced membranous vesicles, creating a dsRNA genomic replication form. This dsRNA is then used as template to synthesize positive stranded RNA genomes. ss(+)RNA genomes are either translated, replicated or encapsidated. Major viral protease that mediates proteolytic processing of the polyprotein. Cleaves host EIF5B, contributing to host translation shutoff. Also cleaves host PABPC1, contributing to host translation shutoff. Cleaves host NLRP1, triggers host N-glycine-mediated degradation of the autoinhibitory NLRP1 N-terminal fragment. This Homo sapiens (Human) protein is Genome polyprotein.